The following is a 346-amino-acid chain: Methylthioribose-1-phosphate isomerase (346 aa).

Substrate contacts are provided by residues 48-50, R91, and Q200; that span reads RGA. The active-site Proton donor is the D241. 251–252 is a substrate binding site; that stretch reads NK.

It belongs to the eIF-2B alpha/beta/delta subunits family. MtnA subfamily.

It catalyses the reaction 5-(methylsulfanyl)-alpha-D-ribose 1-phosphate = 5-(methylsulfanyl)-D-ribulose 1-phosphate. It functions in the pathway amino-acid biosynthesis; L-methionine biosynthesis via salvage pathway; L-methionine from S-methyl-5-thio-alpha-D-ribose 1-phosphate: step 1/6. Functionally, catalyzes the interconversion of methylthioribose-1-phosphate (MTR-1-P) into methylthioribulose-1-phosphate (MTRu-1-P). The polypeptide is Methylthioribose-1-phosphate isomerase (Picosynechococcus sp. (strain ATCC 27264 / PCC 7002 / PR-6) (Agmenellum quadruplicatum)).